Here is a 425-residue protein sequence, read N- to C-terminus: ATP-dependent RNA helicase eIF4A (425 aa).

A Q motif motif is present at residues 38 to 66 (DTWEDYGLKEDLLKGIYSIGFETPSFIQK). The Helicase ATP-binding domain maps to 69 to 241 (IQPIIDGRDI…EEILINPVII (173 aa)). 82–89 (AQSGTGKT) lines the ATP pocket. A DEAD box motif is present at residues 187–190 (DEAD). The Helicase C-terminal domain maps to 252 to 425 (GIRQYFIDLR…KELPADFSFQ (174 aa)).

Belongs to the DEAD box helicase family. eIF4A subfamily. In terms of assembly, component of the eIF4F complex, which composition varies with external and internal environmental conditions. It is composed of at least eIF4A, eIF4E and eIF4G.

Its subcellular location is the cytoplasm. The enzyme catalyses ATP + H2O = ADP + phosphate + H(+). Its function is as follows. ATP-dependent RNA helicase which is a subunit of the eIF4F complex involved in cap recognition and is required for mRNA binding to ribosome. In the current model of translation initiation, eIF4A unwinds RNA secondary structures in the 5'-UTR of mRNAs which is necessary to allow efficient binding of the small ribosomal subunit, and subsequent scanning for the initiator codon. The sequence is that of ATP-dependent RNA helicase eIF4A (TIF1) from Encephalitozoon cuniculi (strain GB-M1) (Microsporidian parasite).